A 463-amino-acid polypeptide reads, in one-letter code: Asparagine--tRNA ligase (463 aa).

Belongs to the class-II aminoacyl-tRNA synthetase family. As to quaternary structure, homodimer.

It is found in the cytoplasm. It catalyses the reaction tRNA(Asn) + L-asparagine + ATP = L-asparaginyl-tRNA(Asn) + AMP + diphosphate + H(+). In Clostridium botulinum (strain Langeland / NCTC 10281 / Type F), this protein is Asparagine--tRNA ligase.